Consider the following 90-residue polypeptide: Small ribosomal subunit protein bS16 (90 aa).

The protein belongs to the bacterial ribosomal protein bS16 family.

The chain is Small ribosomal subunit protein bS16 from Streptococcus gordonii (strain Challis / ATCC 35105 / BCRC 15272 / CH1 / DL1 / V288).